We begin with the raw amino-acid sequence, 187 residues long: Adenine phosphoribosyltransferase (187 aa).

Belongs to the purine/pyrimidine phosphoribosyltransferase family. Homodimer.

It is found in the cytoplasm. It catalyses the reaction AMP + diphosphate = 5-phospho-alpha-D-ribose 1-diphosphate + adenine. The protein operates within purine metabolism; AMP biosynthesis via salvage pathway; AMP from adenine: step 1/1. In terms of biological role, catalyzes a salvage reaction resulting in the formation of AMP, that is energically less costly than de novo synthesis. In Burkholderia pseudomallei (strain 668), this protein is Adenine phosphoribosyltransferase.